A 460-amino-acid polypeptide reads, in one-letter code: MKSEVLSVKEKIGYGMGDAASHIIFDNVMLYMMFFYTDIFGIPAGFVGTMFLVARALDAISDPCMGLLADRTRSRWGKFRPWVLFGALPFGIVCVLAYSTPDLSMNGKMIYAAITYTLLTLLYTVVNIPYCALGGVITNDPTQRISLQSWRFVLATAGGMLSTVLMMPLVNLIGGDNKPLGFQGGIAVLSVVAFMMLAFCFFTTKERVEAPPTTTSMREDLRDIWQNDQWRIVGLLTIFNILAVCVRGGAMMYYVTWILGTPEVFVAFLTTYCVGNLIGSALAKPLTDWKCKVTIFWWTNALLAVISLAMFFVPMQASITMFVFIFVIGVLHQLVTPIQWVMMSDTVDYGEWCNGKRLTGISFAGTLFVLKLGLAFGGALIGWMLAYGGYDAAEKAQNSATISIIIALFTIVPAICYLLSAIIAKRYYSLTTHNLKTVMEQLAQGKRRCQQQFTSQEVQN.

Over 1–11 the chain is Periplasmic; the sequence is MKSEVLSVKEK. A run of 2 helical transmembrane segments spans residues 12-32 and 33-53; these read IGYG…MLYM and MFFY…MFLV. Residues 54–80 are Periplasmic-facing; the sequence is ARALDAISDPCMGLLADRTRSRWGKFR. The helical transmembrane segment at 81-101 threads the bilayer; that stretch reads PWVLFGALPFGIVCVLAYSTP. Residues 102–116 lie on the Cytoplasmic side of the membrane; it reads DLSMNGKMIYAAITY. The helical transmembrane segment at 117–137 threads the bilayer; sequence TLLTLLYTVVNIPYCALGGVI. The Periplasmic segment spans residues 138–152; the sequence is TNDPTQRISLQSWRF. The helical transmembrane segment at 153-173 threads the bilayer; sequence VLATAGGMLSTVLMMPLVNLI. Residues 174–181 are Cytoplasmic-facing; it reads GGDNKPLG. A helical membrane pass occupies residues 182–202; it reads FQGGIAVLSVVAFMMLAFCFF. Residues 203 to 248 are Periplasmic-facing; the sequence is TTKERVEAPPTTTSMREDLRDIWQNDQWRIVGLLTIFNILAVCVRG. The chain crosses the membrane as a helical span at residues 249–269; sequence GAMMYYVTWILGTPEVFVAFL. Residues 270–288 are Cytoplasmic-facing; that stretch reads TTYCVGNLIGSALAKPLTD. A helical membrane pass occupies residues 289–309; it reads WKCKVTIFWWTNALLAVISLA. Residue methionine 310 is a topological domain, periplasmic. A helical membrane pass occupies residues 311-331; the sequence is FFVPMQASITMFVFIFVIGVL. Residues 332-366 are Cytoplasmic-facing; that stretch reads HQLVTPIQWVMMSDTVDYGEWCNGKRLTGISFAGT. A helical membrane pass occupies residues 367-387; that stretch reads LFVLKLGLAFGGALIGWMLAY. Residues 388–403 lie on the Periplasmic side of the membrane; it reads GGYDAAEKAQNSATIS. A helical transmembrane segment spans residues 404-424; the sequence is IIIALFTIVPAICYLLSAIIA. At 425–460 the chain is on the cytoplasmic side; sequence KRYYSLTTHNLKTVMEQLAQGKRRCQQQFTSQEVQN.

The protein belongs to the sodium:galactoside symporter (TC 2.A.2) family.

The protein localises to the cell inner membrane. This Escherichia coli (strain K12) protein is Inner membrane symporter YicJ (yicJ).